Consider the following 351-residue polypeptide: Geranylgeranyl pyrophosphate synthase (351 aa).

Isopentenyl diphosphate-binding residues include lysine 55, arginine 58, and glutamine 93. Residues aspartate 100 and aspartate 104 each coordinate Mg(2+). Arginine 109 lines the dimethylallyl diphosphate pocket. An isopentenyl diphosphate-binding site is contributed by arginine 110. The dimethylallyl diphosphate site is built by lysine 196, threonine 197, glutamine 236, lysine 253, and lysine 262.

This sequence belongs to the FPP/GGPP synthase family. Interacts with fps1. It depends on Mg(2+) as a cofactor.

It is found in the cytoplasm. It localises to the nucleus. It catalyses the reaction isopentenyl diphosphate + dimethylallyl diphosphate = (2E)-geranyl diphosphate + diphosphate. The catalysed reaction is isopentenyl diphosphate + (2E)-geranyl diphosphate = (2E,6E)-farnesyl diphosphate + diphosphate. It carries out the reaction isopentenyl diphosphate + (2E,6E)-farnesyl diphosphate = (2E,6E,10E)-geranylgeranyl diphosphate + diphosphate. Its pathway is isoprenoid biosynthesis; farnesyl diphosphate biosynthesis; farnesyl diphosphate from geranyl diphosphate and isopentenyl diphosphate: step 1/1. The protein operates within isoprenoid biosynthesis; geranyl diphosphate biosynthesis; geranyl diphosphate from dimethylallyl diphosphate and isopentenyl diphosphate: step 1/1. It participates in isoprenoid biosynthesis; geranylgeranyl diphosphate biosynthesis; geranylgeranyl diphosphate from farnesyl diphosphate and isopentenyl diphosphate: step 1/1. Its function is as follows. Catalyzes the trans-addition of the 3 molecules of IPP onto DMAPP to form geranylgeranyl pyrophosphate. Required for the membrane attachment of ypt7 and rhb1. May be involved in vesicle trafficking and protein sorting. Required for forespore membrane formation. In Schizosaccharomyces pombe (strain 972 / ATCC 24843) (Fission yeast), this protein is Geranylgeranyl pyrophosphate synthase (spo9).